Reading from the N-terminus, the 186-residue chain is Ribosome-recycling factor (186 aa).

This sequence belongs to the RRF family.

Its subcellular location is the cytoplasm. Its function is as follows. Responsible for the release of ribosomes from messenger RNA at the termination of protein biosynthesis. May increase the efficiency of translation by recycling ribosomes from one round of translation to another. This chain is Ribosome-recycling factor, found in Chelativorans sp. (strain BNC1).